The following is a 131-amino-acid chain: MSMSDPIADMLTRIRNAQLSEKTSVVMPASKLKAAIAQVLKDEGYVEDFIVHEAGGKSILDISLKYYAGRPVIERIERVSRPGLRIYKGSNKLPNVMNGLGVAIVSTSKGVMTERKARANGVGGEVLCIVA.

It belongs to the universal ribosomal protein uS8 family. In terms of assembly, part of the 30S ribosomal subunit. Contacts proteins S5 and S12.

Functionally, one of the primary rRNA binding proteins, it binds directly to 16S rRNA central domain where it helps coordinate assembly of the platform of the 30S subunit. This is Small ribosomal subunit protein uS8 from Nitrosospira multiformis (strain ATCC 25196 / NCIMB 11849 / C 71).